Here is a 444-residue protein sequence, read N- to C-terminus: Transcription activator AKTR-1 (444 aa).

Residues 16–43 (CDFCTQSKLRCNKNKPSCRRCTIQQQPC) constitute a DNA-binding region (zn(2)-C6 fungal-type). The disordered stretch occupies residues 49 to 87 (RRTGRPPKHPRKANDCQEANGQHGEQDPVTSTPGGSCQQ). A compositionally biased stretch (basic residues) spans 50–59 (RTGRPPKHPR). A compositionally biased stretch (polar residues) spans 76 to 87 (PVTSTPGGSCQQ).

The protein localises to the nucleus. Functionally, transcription factor that regulates the expression of the gene clusters that mediate the biosynthesis of the host-selective toxins (HSTs) AK-toxins responsible for Japanese pear black spot disease by the Japanese pear pathotype. AK-toxins are esters of 9,10-epoxy 8-hydroxy 9-methyldecatrienoic acid (EDA). On cellular level, AK-toxins affect plasma membrane of susceptible cells and cause a sudden increase in loss of K(+) after a few minutes of toxin treatment. This Alternaria alternata (Alternaria rot fungus) protein is Transcription activator AKTR-1.